We begin with the raw amino-acid sequence, 443 residues long: DNA primase DnaG (443 aa).

A Toprim domain is found at 169–243 (DSIIIVEGRA…DIDYVSRAPY (75 aa)). Mg(2+) contacts are provided by E175, D217, and D219.

It belongs to the archaeal DnaG primase family. As to quaternary structure, forms a ternary complex with MCM helicase and DNA. The cofactor is Mg(2+).

The catalysed reaction is ssDNA + n NTP = ssDNA/pppN(pN)n-1 hybrid + (n-1) diphosphate.. Its function is as follows. RNA polymerase that catalyzes the synthesis of short RNA molecules used as primers for DNA polymerase during DNA replication. In Methanococcus vannielii (strain ATCC 35089 / DSM 1224 / JCM 13029 / OCM 148 / SB), this protein is DNA primase DnaG.